We begin with the raw amino-acid sequence, 77 residues long: Pi/alpha-stichotoxin-Hmg5b (77 aa).

A signal peptide spans 1-21 (MDYQRLLFLFAVAMVITTTVA). Residues 22 to 34 (LPKDTALMDGQLQ) constitute a propeptide that is removed on maturation. 3 cysteine pairs are disulfide-bonded: cysteine 40–cysteine 73, cysteine 42–cysteine 66, and cysteine 56–cysteine 74. Residue methionine 52 is modified to Methionine sulfoxide; partial.

Belongs to the sea anemone type 3 (BDS) potassium channel toxin family. Toxin occurs in two forms in the mucus, Hmg 1b-2 which is not oxidized and Hmg 1b-2 MetOx which is oxidized at Met-52.

The protein localises to the secreted. The protein resides in the nematocyst. The non-oxidized toxin is remarkably non-selective with activity on many different ion channels. Weakly and reversibly inhibits rat and human homomeric ASIC1 (isoform ASIC1a) (IC(50)=4.8 uM, and IC(50)=14.6 uM), and ASIC3 (IC(50)=15.9 uM). Molecular modeling interaction with ASIC1a suggests that this peptide hinders the collapse of acidic pockets and stabilizes nonconducting channels state. It activates several potassium channels including Kv1.1/KCNA1, Kv1.2/KCNA2, and drosophila Shaker IR. It moderately to potently inhibits potassium channels including Kv1.3/KCNA3, Kv1.4/KCNA4, Kv1.5/KCNA5, Kv1.6/KCNA6, Kv2.1/KCNB1, Kv4.2/KCND2, Kv7.1/KCNQ1, Kv7.2/Kv7.3 (KCNQ2/KCNQ3), Kv7.4/KCNQ4, hERG/KCNH2, and C.elegans QKT1. On sodium channels, it moderately to potently inhibits Nav1.1/SCN1A, Nav1.2/SCN2A, Nav1.3/SCN3A, Nav1.4/SCN4A, Nav1.5/SCN5A, Nav1.6/SCN8A, Nav1.7/SCN9A, Nav1.8/SCN10A, and B.germanica BgNav. It also moderately to potently inhibits Cav3.1/CACNA1G, Cav3.2/CACNA1H, and Cav3.3/CACNA1I. Significant shifts in the voltage-current relationship are observed on Kv and Nav, depending on the channel isoform, whereas the toxin does not seem to modulate the voltage-sensor domains of Cav channels, acting mainly as a pore blocker. Does not activate nicotinic acetylcholine receptors (nAChR), but potentiates ACh-elicited current of human alpha-7/CHRNA7 nAChR. Is also able to bind T.californica muscle-type nAChRs. In vivo, causes an excitatory effect in mice behavior. Also shows antihyperalgesic and analgesic activity in the acid-induced muscle pain mice model, and weak anti-inflammatory effect in models of acute local inflammation. In terms of biological role, forms an oxidized toxin derivative (Hmg 1b-2 MetOx). Able to bind T.californica muscle-type nAChRs (alpha-1-beta-1-delta-epsilon (CHRNA1-CHRNB1-CHRND-CHRNE)). The polypeptide is Pi/alpha-stichotoxin-Hmg5b (Heteractis magnifica (Magnificent sea anemone)).